The primary structure comprises 570 residues: Spastin (570 aa).

At 1–35 (MNSGHKARLRGGRACGPVSDGSARGNRLLFYTRSL) the chain is on the cytoplasmic side. The segment at residues 36 to 52 (SRVPEWLLRVLLLLLRW) is an intramembrane region (helical). Residues 53–570 (LFQPIRRAMA…NREYGDTTGV (518 aa)) lie on the Cytoplasmic side of the membrane. In terms of domain architecture, MIT spans 83-158 (YHKQAFEFIS…SMAEDRLKLL (76 aa)). The interval 186–269 (APASGAVSKK…SPQRKRDMKN (84 aa)) is disordered. 3 stretches are compositionally biased toward polar residues: residues 199 to 208 (LTITNQTSLR), 216 to 242 (TPNA…NQKG), and 251 to 261 (VKASTTATASP). Position 335–342 (335–342 (GPPGNGKT)) interacts with ATP.

It belongs to the AAA ATPase family. Spastin subfamily. Homohexamer. The homohexamer is stabilized by ATP-binding. The homohexamer may adopt a ring conformation through which microtubules pass prior to being severed. Interacts with microtubules.

Its subcellular location is the membrane. It localises to the cytoplasm. It is found in the cytoskeleton. The protein resides in the microtubule organizing center. The protein localises to the centrosome. Its subcellular location is the perinuclear region. It localises to the nucleus. The catalysed reaction is n ATP + n H2O + a microtubule = n ADP + n phosphate + (n+1) alpha/beta tubulin heterodimers.. Functionally, ATP-dependent microtubule severing protein that specifically recognizes and cuts microtubules that are polyglutamylated. Preferentially recognizes and acts on microtubules decorated with short polyglutamate tails: severing activity increases as the number of glutamates per tubulin rises from one to eight, but decreases beyond this glutamylation threshold. Microtubule severing promotes reorganization of cellular microtubule arrays and the release of microtubules from the centrosome following nucleation. Required for membrane traffic from the endoplasmic reticulum (ER) to the Golgi and for completion of the abscission stage of cytokinesis. Also plays a role in axon growth and the formation of axonal branches. This is Spastin from Danio rerio (Zebrafish).